We begin with the raw amino-acid sequence, 120 residues long: Ribonuclease P protein component (120 aa).

It belongs to the RnpA family. As to quaternary structure, consists of a catalytic RNA component (M1 or rnpB) and a protein subunit.

It catalyses the reaction Endonucleolytic cleavage of RNA, removing 5'-extranucleotides from tRNA precursor.. Functionally, RNaseP catalyzes the removal of the 5'-leader sequence from pre-tRNA to produce the mature 5'-terminus. It can also cleave other RNA substrates such as 4.5S RNA. The protein component plays an auxiliary but essential role in vivo by binding to the 5'-leader sequence and broadening the substrate specificity of the ribozyme. This is Ribonuclease P protein component from Thioalkalivibrio sulfidiphilus (strain HL-EbGR7).